The following is a 474-amino-acid chain: Probable glycine dehydrogenase (decarboxylating) subunit 2 (474 aa).

At Lys262 the chain carries N6-(pyridoxal phosphate)lysine.

This sequence belongs to the GcvP family. C-terminal subunit subfamily. In terms of assembly, the glycine cleavage system is composed of four proteins: P, T, L and H. In this organism, the P 'protein' is a heterodimer of two subunits. Requires pyridoxal 5'-phosphate as cofactor.

It catalyses the reaction N(6)-[(R)-lipoyl]-L-lysyl-[glycine-cleavage complex H protein] + glycine + H(+) = N(6)-[(R)-S(8)-aminomethyldihydrolipoyl]-L-lysyl-[glycine-cleavage complex H protein] + CO2. Functionally, the glycine cleavage system catalyzes the degradation of glycine. The P protein binds the alpha-amino group of glycine through its pyridoxal phosphate cofactor; CO(2) is released and the remaining methylamine moiety is then transferred to the lipoamide cofactor of the H protein. In Thermotoga maritima (strain ATCC 43589 / DSM 3109 / JCM 10099 / NBRC 100826 / MSB8), this protein is Probable glycine dehydrogenase (decarboxylating) subunit 2.